The sequence spans 695 residues: DNA ligase (695 aa).

NAD(+) is bound by residues 44–48 (DAEYD), 93–94 (SL), and glutamate 123. The N6-AMP-lysine intermediate role is filled by lysine 125. Residues arginine 146, glutamate 184, lysine 300, and lysine 324 each coordinate NAD(+). Zn(2+) contacts are provided by cysteine 418, cysteine 421, cysteine 436, and cysteine 442. One can recognise a BRCT domain in the interval 605–694 (SAAKPLAGIT…PDAARSMAQR (90 aa)).

Belongs to the NAD-dependent DNA ligase family. LigA subfamily. Requires Mg(2+) as cofactor. It depends on Mn(2+) as a cofactor.

It carries out the reaction NAD(+) + (deoxyribonucleotide)n-3'-hydroxyl + 5'-phospho-(deoxyribonucleotide)m = (deoxyribonucleotide)n+m + AMP + beta-nicotinamide D-nucleotide.. Functionally, DNA ligase that catalyzes the formation of phosphodiester linkages between 5'-phosphoryl and 3'-hydroxyl groups in double-stranded DNA using NAD as a coenzyme and as the energy source for the reaction. It is essential for DNA replication and repair of damaged DNA. The chain is DNA ligase from Acidothermus cellulolyticus (strain ATCC 43068 / DSM 8971 / 11B).